The following is a 157-amino-acid chain: Small ribosomal subunit protein uS9 (157 aa).

The protein belongs to the universal ribosomal protein uS9 family.

In Caulobacter sp. (strain K31), this protein is Small ribosomal subunit protein uS9.